The following is a 172-amino-acid chain: UPF0102 protein AM1_3954 (172 aa).

It belongs to the UPF0102 family.

The polypeptide is UPF0102 protein AM1_3954 (Acaryochloris marina (strain MBIC 11017)).